Consider the following 388-residue polypeptide: GTPase Obg (388 aa).

Residues serine 4–leucine 162 form the Obg domain. The segment at lysine 18–glycine 45 is disordered. The segment covering glycine 36–glycine 45 has biased composition (gly residues). Residues alanine 163–asparagine 329 form the OBG-type G domain. GTP-binding positions include glycine 169–serine 176, phenylalanine 194–glutamate 198, aspartate 216–glycine 219, threonine 283–aspartate 286, and serine 310–valine 312. Residues serine 176 and threonine 196 each coordinate Mg(2+). The segment at leucine 352 to lysine 388 is disordered. Residues glycine 356 to lysine 388 are compositionally biased toward acidic residues.

The protein belongs to the TRAFAC class OBG-HflX-like GTPase superfamily. OBG GTPase family. Monomer. Mg(2+) serves as cofactor.

The protein localises to the cytoplasm. An essential GTPase which binds GTP, GDP and possibly (p)ppGpp with moderate affinity, with high nucleotide exchange rates and a fairly low GTP hydrolysis rate. Plays a role in control of the cell cycle, stress response, ribosome biogenesis and in those bacteria that undergo differentiation, in morphogenesis control. This chain is GTPase Obg, found in Bacteroides fragilis (strain ATCC 25285 / DSM 2151 / CCUG 4856 / JCM 11019 / LMG 10263 / NCTC 9343 / Onslow / VPI 2553 / EN-2).